Consider the following 142-residue polypeptide: uncharacterized protein (142 aa).

The 120-residue stretch at 1–120 (MADKFDANDE…TILKWEKNMD (120 aa)) folds into the N-acetyltransferase domain.

The protein belongs to the acetyltransferase family.

This is an uncharacterized protein from Streptococcus pyogenes serotype M3 (strain ATCC BAA-595 / MGAS315).